We begin with the raw amino-acid sequence, 496 residues long: Lysine--tRNA ligase (496 aa).

Mg(2+) contacts are provided by E409 and E416.

The protein belongs to the class-II aminoacyl-tRNA synthetase family. As to quaternary structure, homodimer. The cofactor is Mg(2+).

The protein resides in the cytoplasm. It catalyses the reaction tRNA(Lys) + L-lysine + ATP = L-lysyl-tRNA(Lys) + AMP + diphosphate. This chain is Lysine--tRNA ligase, found in Streptococcus agalactiae serotype III (strain NEM316).